Consider the following 404-residue polypeptide: Dual-specificity RNA methyltransferase RlmN (404 aa).

Glu-118 acts as the Proton acceptor in catalysis. Positions 125–357 constitute a Radical SAM core domain; the sequence is VGRAGALCVS…NKAGYSSPIR (233 aa). Cys-132 and Cys-368 are oxidised to a cystine. [4Fe-4S] cluster is bound by residues Cys-139, Cys-143, and Cys-146. Residues 194-195, Ser-226, 248-250, and Asn-325 each bind S-adenosyl-L-methionine; these read GE and SLH. Residue Cys-368 is the S-methylcysteine intermediate of the active site.

Belongs to the radical SAM superfamily. RlmN family. [4Fe-4S] cluster serves as cofactor.

The protein resides in the cytoplasm. The catalysed reaction is adenosine(2503) in 23S rRNA + 2 reduced [2Fe-2S]-[ferredoxin] + 2 S-adenosyl-L-methionine = 2-methyladenosine(2503) in 23S rRNA + 5'-deoxyadenosine + L-methionine + 2 oxidized [2Fe-2S]-[ferredoxin] + S-adenosyl-L-homocysteine. The enzyme catalyses adenosine(37) in tRNA + 2 reduced [2Fe-2S]-[ferredoxin] + 2 S-adenosyl-L-methionine = 2-methyladenosine(37) in tRNA + 5'-deoxyadenosine + L-methionine + 2 oxidized [2Fe-2S]-[ferredoxin] + S-adenosyl-L-homocysteine. In terms of biological role, specifically methylates position 2 of adenine 2503 in 23S rRNA and position 2 of adenine 37 in tRNAs. m2A2503 modification seems to play a crucial role in the proofreading step occurring at the peptidyl transferase center and thus would serve to optimize ribosomal fidelity. The chain is Dual-specificity RNA methyltransferase RlmN from Caulobacter vibrioides (strain ATCC 19089 / CIP 103742 / CB 15) (Caulobacter crescentus).